A 387-amino-acid chain; its full sequence is Protein RecA (387 aa).

80–87 is an ATP binding site; it reads GPESSGKT. The segment at 348 to 387 is disordered; that stretch reads LDDSEVAETEEETTASKTKAKAKKEEKAVETEEIELELED. Composition is skewed to acidic residues over residues 349–360 and 378–387; these read DDSEVAETEEET and TEEIELELED.

The protein belongs to the RecA family.

It is found in the cytoplasm. Can catalyze the hydrolysis of ATP in the presence of single-stranded DNA, the ATP-dependent uptake of single-stranded DNA by duplex DNA, and the ATP-dependent hybridization of homologous single-stranded DNAs. It interacts with LexA causing its activation and leading to its autocatalytic cleavage. The chain is Protein RecA from Lactococcus lactis subsp. cremoris (strain MG1363).